Consider the following 77-residue polypeptide: Small ribosomal subunit protein uS17 (77 aa).

Belongs to the universal ribosomal protein uS17 family. As to quaternary structure, part of the 30S ribosomal subunit.

In terms of biological role, one of the primary rRNA binding proteins, it binds specifically to the 5'-end of 16S ribosomal RNA. The polypeptide is Small ribosomal subunit protein uS17 (Rickettsia prowazekii (strain Madrid E)).